Here is a 107-residue protein sequence, read N- to C-terminus: Putative protein RFPL3S (107 aa).

In terms of tissue distribution, strongly expressed in the testis and weakly in brain, placenta and pancreas.

This chain is Putative protein RFPL3S (RFPL3S), found in Homo sapiens (Human).